We begin with the raw amino-acid sequence, 184 residues long: GTP-dependent dephospho-CoA kinase (184 aa).

GTP-binding residues include aspartate 33, valine 34, aspartate 52, lysine 54, and glutamate 103.

Belongs to the GTP-dependent DPCK family.

It carries out the reaction 3'-dephospho-CoA + GTP = GDP + CoA + H(+). The protein operates within cofactor biosynthesis; coenzyme A biosynthesis. Catalyzes the GTP-dependent phosphorylation of the 3'-hydroxyl group of dephosphocoenzyme A to form coenzyme A (CoA). This Ignicoccus hospitalis (strain KIN4/I / DSM 18386 / JCM 14125) protein is GTP-dependent dephospho-CoA kinase.